The sequence spans 91 residues: MANKQDLIAKVAEATELTKKDSAAAVDAVFASIEEFLAAGEKVQLIGFGNFEVRERAARQGRNPQTGETISIAASKVPAFKAGKALKDAVK.

This sequence belongs to the bacterial histone-like protein family. In terms of assembly, homodimer.

Histone-like DNA-binding protein which is capable of wrapping DNA to stabilize it, and thus to prevent its denaturation under extreme environmental conditions. The chain is DNA-binding protein HU (hup) from Streptococcus thermophilus.